The sequence spans 151 residues: Deoxyuridine 5'-triphosphate nucleotidohydrolase (151 aa).

Substrate contacts are provided by residues arginine 70 to glycine 72, asparagine 83, leucine 87 to aspartate 89, and methionine 97.

It belongs to the dUTPase family. Mg(2+) serves as cofactor.

The catalysed reaction is dUTP + H2O = dUMP + diphosphate + H(+). Its pathway is pyrimidine metabolism; dUMP biosynthesis; dUMP from dCTP (dUTP route): step 2/2. Functionally, this enzyme is involved in nucleotide metabolism: it produces dUMP, the immediate precursor of thymidine nucleotides and it decreases the intracellular concentration of dUTP so that uracil cannot be incorporated into DNA. The protein is Deoxyuridine 5'-triphosphate nucleotidohydrolase of Pseudomonas fluorescens (strain SBW25).